Reading from the N-terminus, the 765-residue chain is MQIRYFLALSLLPQVVLADESPTASASQCVIEPPVPRIVSQPGLSAADQEKIRIVSDRSNAEMGKQAIFTGDVVFSQGDRHIAADEAILDQATEQFDANGNLVFQDSIFTVTADSLQAQMRSNRATLKGAQYWLHGQQVHGDAEKLQITMNNNLILTNTNFTTCPPDNVSWLLEAEKIKINSEEEWGEIWNAKLRVADIPVFYIPYMTVPVSDKRKTGFLYPSFSTSTTNGFEVSAPYYWNIAPEYDLTFTPNYMSSRGLFTKTEFRYLAGEAQSGRLNLEYLGNDQMISGSPNRYLYNWQHQGAIDKNWRVLANFTEVSDNNYFNDLKSDVNRATDNQLSRIGEVSYFERDWDISTRVQDIKVLGEDEKPYQVMPQVNFNYRAADFWNNLDFGFNSELTNFAHQDSDMNTATRLHMAPSLTLPIHGPSGSLTSQVKLMQTNYWQEKNNSGFDGLDDTVSRTIPQVRINGQINFERFTELFDQNYRQTLEPQFQYLYVGYEDQRGIGIYDTAQLQDDYFGLFRDRRFSGLDRIADANQVTLGVTTRFFDDHNQEATKFSLGQILYLQDSKLGYEDNLFEQNQSTSVLAAELDTRLSHDWYLGAAIQYDTNSSDNKKTEVTLDFRPEANKLLQLSYRYVPDLLNSNTNDLVNISQAGVRGAWPINDSLYFVGNWYYDLNESRSIETYTGFQYESCCYAIRLSYHYRIKTNYDDNIGSAVIDEREQFESGVYLNLVIKGLGGSGPLGVSDMLNDGLFNYRKPLYLRN.

An N-terminal signal peptide occupies residues Met1 to Ala18.

Belongs to the LptD family. As to quaternary structure, component of the lipopolysaccharide transport and assembly complex. Interacts with LptE and LptA.

The protein resides in the cell outer membrane. Together with LptE, is involved in the assembly of lipopolysaccharide (LPS) at the surface of the outer membrane. This Shewanella sp. (strain ANA-3) protein is LPS-assembly protein LptD.